Here is a 374-residue protein sequence, read N- to C-terminus: Alanine racemase (374 aa).

Catalysis depends on K35, which acts as the Proton acceptor; specific for D-alanine. Position 35 is an N6-(pyridoxal phosphate)lysine (K35). R130 is a substrate binding site. Y253 acts as the Proton acceptor; specific for L-alanine in catalysis. Position 305 (M305) interacts with substrate.

Belongs to the alanine racemase family. Pyridoxal 5'-phosphate is required as a cofactor.

The catalysed reaction is L-alanine = D-alanine. The protein operates within amino-acid biosynthesis; D-alanine biosynthesis; D-alanine from L-alanine: step 1/1. In terms of biological role, catalyzes the interconversion of L-alanine and D-alanine. May also act on other amino acids. The polypeptide is Alanine racemase (alr) (Ralstonia pickettii (strain 12J)).